Reading from the N-terminus, the 283-residue chain is uncharacterized protein (283 aa).

G2 carries N-myristoyl glycine; by host lipidation. Residues N31, N95, N105, N108, N137, and N147 are each glycosylated (N-linked (GlcNAc...) asparagine; by host). The next 2 helical transmembrane spans lie at 181–201 (IIAA…VVYF) and 250–270 (FIVL…LDIP). An N-linked (GlcNAc...) asparagine; by host glycan is attached at N277.

Its subcellular location is the membrane. This is an uncharacterized protein from Acanthamoeba polyphaga (Amoeba).